We begin with the raw amino-acid sequence, 469 residues long: MKIKTRFAPSPTGYLHVGGARTALYSWLFARNHGGEFVLRIEDTDLERSTQQAIDAIMDGMNWLNLDWDEGPYYQTKRFDRYNTVIDQMLEAGSAYKCYCSKERLETLRENQMANGEKPRYDGRCRDGHEHHAENEPCVVRFRNPQEGSVIFDDQIRGPIEFSNQELDDLIIRRTDGAPTYNFCVVIDDWDMEITHVIRGEDHINNTPRQINILKAIGAQVPVYAHVSMILGDDGKKLSKRHGAVGVMQYRDDGYLPEALLNYLVRLGWSHGDQEIFSIDEMKKLFELDVVSKSASAFNTEKLQWLNHHYINSLAPEYVATHLQWHIEQENIDTRTGPQLAQLVKLLGERCKTLKEMAASCRYFYEEFDEFDADAAKKHLRPVARQPLEVVRDKLAAMSDWTAEGVHQAIQAAADELEVGMGKVGMPLRVAVTGAGQSPALDVTVHAIGQARSVARIEKALAYIATREA.

The 'HIGH' region signature appears at 9-19 (PSPTGYLHVGG). 4 residues coordinate Zn(2+): Cys98, Cys100, Cys125, and Asp127. The 'KMSKS' region motif lies at 237–241 (KLSKR). Residue Lys240 participates in ATP binding.

This sequence belongs to the class-I aminoacyl-tRNA synthetase family. Glutamate--tRNA ligase type 1 subfamily. Monomer. It depends on Zn(2+) as a cofactor.

The protein resides in the cytoplasm. The catalysed reaction is tRNA(Glu) + L-glutamate + ATP = L-glutamyl-tRNA(Glu) + AMP + diphosphate. In terms of biological role, catalyzes the attachment of glutamate to tRNA(Glu) in a two-step reaction: glutamate is first activated by ATP to form Glu-AMP and then transferred to the acceptor end of tRNA(Glu). The chain is Glutamate--tRNA ligase from Erwinia tasmaniensis (strain DSM 17950 / CFBP 7177 / CIP 109463 / NCPPB 4357 / Et1/99).